A 419-amino-acid polypeptide reads, in one-letter code: Serine--tRNA ligase (419 aa).

226-228 (TSE) is an L-serine binding site. ATP contacts are provided by residues 257–259 (RRE) and Val273. Glu280 lines the L-serine pocket. 344–347 (ELTS) serves as a coordination point for ATP. Thr379 contributes to the L-serine binding site.

This sequence belongs to the class-II aminoacyl-tRNA synthetase family. Type-1 seryl-tRNA synthetase subfamily. In terms of assembly, homodimer. The tRNA molecule binds across the dimer.

It is found in the cytoplasm. It catalyses the reaction tRNA(Ser) + L-serine + ATP = L-seryl-tRNA(Ser) + AMP + diphosphate + H(+). The catalysed reaction is tRNA(Sec) + L-serine + ATP = L-seryl-tRNA(Sec) + AMP + diphosphate + H(+). Its pathway is aminoacyl-tRNA biosynthesis; selenocysteinyl-tRNA(Sec) biosynthesis; L-seryl-tRNA(Sec) from L-serine and tRNA(Sec): step 1/1. In terms of biological role, catalyzes the attachment of serine to tRNA(Ser). Is also able to aminoacylate tRNA(Sec) with serine, to form the misacylated tRNA L-seryl-tRNA(Sec), which will be further converted into selenocysteinyl-tRNA(Sec). The chain is Serine--tRNA ligase from Corynebacterium diphtheriae (strain ATCC 700971 / NCTC 13129 / Biotype gravis).